A 158-amino-acid polypeptide reads, in one-letter code: MEINREEIEKKVKEIVEPVIRGMGFKLFDVEFKPEGRGWVLRIIADKEGGITIKDCEEISRKVSALLDVEDIIPFSYLLEITSPGLTRPLTKVEHYDFFKGRLVKLILKEPIEGKREVVGYIEDVKNGIIDIREKEKGKVLHIPFSAIAKGRLEIEGW.

This sequence belongs to the RimP family.

Its subcellular location is the cytoplasm. Required for maturation of 30S ribosomal subunits. This Aquifex aeolicus (strain VF5) protein is Ribosome maturation factor RimP.